The chain runs to 131 residues: UPF0102 protein YraN (131 aa).

Over residues 1–19 (MATVPTRSGSPRQLTTKQT) the composition is skewed to polar residues. The segment at 1-21 (MATVPTRSGSPRQLTTKQTGD) is disordered.

Belongs to the UPF0102 family.

This is UPF0102 protein YraN from Escherichia coli O127:H6 (strain E2348/69 / EPEC).